Consider the following 393-residue polypeptide: Ceramide synthase 4 (393 aa).

At 1-31 (MWSSLNDWLWNERLWLPANISWAQLEDHDGL) the chain is on the lumenal side. N-linked (GlcNAc...) asparagine glycosylation is present at asparagine 19. The chain crosses the membrane as a helical span at residues 32–52 (VFPHPQDTLMAVPLALALVVV). The homeobox-like stretch occupies residues 67–128 (WLGVRNQIRR…RRRRNQDRPC (62 aa)). One can recognise a TLC domain in the interval 131–332 (KKFCESSWKF…ILCMIYSFIK (202 aa)). A run of 4 helical transmembrane segments spans residues 140 to 160 (FVFY…ESWL), 179 to 199 (LYHW…TLPF), 209 to 229 (QVIH…LNLL), and 260 to 280 (MCDT…LVLF). Residues 291–301 (ESIGNFSPFFG) carry the Last loop motif motif. The chain crosses the membrane as a helical span at residues 304–324 (FLNILLVILQLLHVFWSWLIL). The Cytoplasmic segment spans residues 325 to 393 (CMIYSFIKKG…RMVNRHTPAT (69 aa)). Residues serine 342, serine 349, and serine 350 each carry the phosphoserine modification. Acidic residues predominate over residues 346–356 (ELDSSDGEAAE). Residues 346 to 393 (ELDSSDGEAAEECPQMKNGAAQRPGAAPTDGPRSRAAGRMVNRHTPAT) are disordered.

Post-translationally, phosphorylated at the C-terminus by CK2.

It is found in the endoplasmic reticulum membrane. The enzyme catalyses sphinganine + octadecanoyl-CoA = N-(octadecanoyl)-sphinganine + CoA + H(+). The catalysed reaction is eicosanoyl-CoA + sphinganine = N-eicosanoylsphinganine + CoA + H(+). It carries out the reaction docosanoyl-CoA + sphinganine = N-docosanoylsphinganine + CoA + H(+). It catalyses the reaction tetracosanoyl-CoA + sphinganine = N-tetracosanoylsphinganine + CoA + H(+). The enzyme catalyses hexacosanoyl-CoA + sphinganine = N-hexacosanoylsphinganine + CoA + H(+). The catalysed reaction is a fatty acyl-CoA + sphing-4-enine = an N-acylsphing-4-enine + CoA + H(+). It carries out the reaction sphing-4-enine + octadecanoyl-CoA = N-octadecanoylsphing-4-enine + CoA + H(+). It catalyses the reaction hexadecasphinganine + octadecanoyl-CoA = N-octadecanoylhexadecasphinganine + CoA + H(+). It functions in the pathway lipid metabolism; sphingolipid metabolism. Functionally, ceramide synthase that catalyzes formation of ceramide from sphinganine and acyl-CoA substrates, with high selectivity toward long and very-long chains (C18:0-C22:0) as acyl donor. The chain is Ceramide synthase 4 from Bos taurus (Bovine).